Consider the following 36-residue polypeptide: Photosystem I reaction center subunit VIII (36 aa).

Residues 6–28 form a helical membrane-spanning segment; the sequence is LPSIFVPXVGLVFPAIAMASXFL.

Belongs to the PsaI family.

It is found in the plastid. It localises to the chloroplast thylakoid membrane. May help in the organization of the PsaL subunit. This Acorus gramineus (Dwarf sweet flag) protein is Photosystem I reaction center subunit VIII.